The sequence spans 285 residues: Protease HtpX homolog (285 aa).

A run of 2 helical transmembrane segments spans residues 7–27 and 30–50; these read TAML…MIGG and GMTI…WFSD. His131 lines the Zn(2+) pocket. Glu132 is an active-site residue. His135 contacts Zn(2+). 2 helical membrane-spanning segments follow: residues 146-166 and 177-197; these read ITAT…FFGG and IAGI…QMAI. Glu202 contacts Zn(2+).

Belongs to the peptidase M48B family. Zn(2+) serves as cofactor.

It is found in the cell inner membrane. The chain is Protease HtpX homolog from Burkholderia cenocepacia (strain ATCC BAA-245 / DSM 16553 / LMG 16656 / NCTC 13227 / J2315 / CF5610) (Burkholderia cepacia (strain J2315)).